The primary structure comprises 307 residues: Trehalose transport system permease protein SugA (307 aa).

6 consecutive transmembrane segments (helical) span residues 25-45 (LAFM…AYPI), 89-109 (LAIT…LALV), 123-143 (AVLI…YYAW), 168-188 (LGIV…LLLL), 217-237 (ILPM…LDAF), and 272-292 (LGSA…FIFI). Residues 85–291 (LAVTLAITAV…GCVAVIAFIF (207 aa)) enclose the ABC transmembrane type-1 domain.

This sequence belongs to the binding-protein-dependent transport system permease family. As to quaternary structure, the complex is composed of two ATP-binding proteins (SugC), two transmembrane proteins (Suga and SugB) and a solute-binding protein (LpqY).

It is found in the cell inner membrane. Its function is as follows. Part of the ABC transporter complex LpqY-SugA-SugB-SugC, which is highly specific for uptake of trehalose. Involved in the recycling of extracellular trehalose released from trehalose-containing molecules synthesized by M.tuberculosis. Trehalose uptake is essential for virulence. Probably responsible for the translocation of the substrate across the membrane. The polypeptide is Trehalose transport system permease protein SugA (sugA) (Mycobacterium tuberculosis (strain CDC 1551 / Oshkosh)).